We begin with the raw amino-acid sequence, 283 residues long: Calpastatin (283 aa).

A compositionally biased stretch (polar residues) spans 1–15 (MNPTETKAIPVSQQM). Disordered stretches follow at residues 1-186 (MNPT…SDPM) and 212-283 (NEGI…KVEK). Residues 21-30 (PNKKKHKKQA) show a composition bias toward basic residues. Lysine 32 is covalently cross-linked (Glycyl lysine isopeptide (Lys-Gly) (interchain with G-Cter in SUMO2)). A compositionally biased stretch (basic and acidic residues) spans 46 to 65 (VVHEKKSQEGKPKEHTEQKS). An N6-acetyllysine modification is found at lysine 50. The residue at position 87 (serine 87) is a Phosphoserine. A compositionally biased stretch (low complexity) spans 107-122 (VSAGGESVAGVAATSG). Serine 133 carries the phosphoserine modification. Threonine 135 is subject to Phosphothreonine. An Inhibitory domain 1 repeat occupies 170-222 (IEEENTTYTGPEVSDPMSSTYIEELGKREVTIPPKYRELLAKNEGITGPPADS). Residues serine 222 and serine 243 each carry the phosphoserine modification. Over residues 249 to 258 (KKTEKEESTE) the composition is skewed to basic and acidic residues.

This sequence belongs to the protease inhibitor I27 (calpastatin) family.

Its function is as follows. Specific inhibition of calpain (calcium-dependent cysteine protease). Plays a key role in postmortem tenderization of meat and have been proposed to be involved in muscle protein degradation in living tissue. In Chlorocebus aethiops (Green monkey), this protein is Calpastatin (CAST).